We begin with the raw amino-acid sequence, 437 residues long: Epsilon-sarcoglycan (437 aa).

Residues 1–317 (MQLPWWWELG…LKSRDYYTDF (317 aa)) are Extracellular-facing. N-linked (GlcNAc...) asparagine glycosylation occurs at Asn-200. Residues 318–338 (LVTLAVPSAVALVLFLILAYI) form a helical membrane-spanning segment. Residues 339 to 437 (MCCRREGVEK…QQQTTGKWYS (99 aa)) lie on the Cytoplasmic side of the membrane. The disordered stretch occupies residues 418-437 (QNLPHQTQIPQQQTTGKWYS).

Belongs to the sarcoglycan alpha/epsilon family. Post-translationally, N-glycosylated. In terms of processing, ubiquitinated, leading to its degradation by the proteasome.

The protein resides in the cell membrane. It is found in the sarcolemma. It localises to the cytoplasm. Its subcellular location is the cytoskeleton. The protein localises to the cell projection. The protein resides in the dendrite. It is found in the golgi apparatus. Functionally, component of the sarcoglycan complex, a subcomplex of the dystrophin-glycoprotein complex which forms a link between the F-actin cytoskeleton and the extracellular matrix. In Bos taurus (Bovine), this protein is Epsilon-sarcoglycan (SGCE).